Reading from the N-terminus, the 311-residue chain is Malate dehydrogenase (311 aa).

NAD(+)-binding positions include 7 to 13 (GAAGGIG) and Asp-34. Positions 81 and 87 each coordinate substrate. Residues Asn-94 and 117-119 (ITN) each bind NAD(+). 2 residues coordinate substrate: Asn-119 and Arg-153. His-177 serves as the catalytic Proton acceptor. Residue Met-227 participates in NAD(+) binding.

This sequence belongs to the LDH/MDH superfamily. MDH type 1 family. As to quaternary structure, homodimer.

The enzyme catalyses (S)-malate + NAD(+) = oxaloacetate + NADH + H(+). Catalyzes the reversible oxidation of malate to oxaloacetate. The polypeptide is Malate dehydrogenase (Shewanella baltica (strain OS155 / ATCC BAA-1091)).